A 198-amino-acid polypeptide reads, in one-letter code: Holliday junction branch migration complex subunit RuvA (198 aa).

The tract at residues 1–64 (MIAHLRGTLL…EDAIALFGFL (64 aa)) is domain I. The segment at 65 to 141 (DREEKRLFER…LDDLIAAAPA (77 aa)) is domain II. The flexible linker stretch occupies residues 141–145 (AAGPV). A domain III region spans residues 146–198 (AAGPAAEDVLSALLNLGYQRPAALKAIETAVEKDAAAGEDFDLLFRAALKLIR).

Belongs to the RuvA family. In terms of assembly, homotetramer. Forms an RuvA(8)-RuvB(12)-Holliday junction (HJ) complex. HJ DNA is sandwiched between 2 RuvA tetramers; dsDNA enters through RuvA and exits via RuvB. An RuvB hexamer assembles on each DNA strand where it exits the tetramer. Each RuvB hexamer is contacted by two RuvA subunits (via domain III) on 2 adjacent RuvB subunits; this complex drives branch migration. In the full resolvosome a probable DNA-RuvA(4)-RuvB(12)-RuvC(2) complex forms which resolves the HJ.

It is found in the cytoplasm. Its function is as follows. The RuvA-RuvB-RuvC complex processes Holliday junction (HJ) DNA during genetic recombination and DNA repair, while the RuvA-RuvB complex plays an important role in the rescue of blocked DNA replication forks via replication fork reversal (RFR). RuvA specifically binds to HJ cruciform DNA, conferring on it an open structure. The RuvB hexamer acts as an ATP-dependent pump, pulling dsDNA into and through the RuvAB complex. HJ branch migration allows RuvC to scan DNA until it finds its consensus sequence, where it cleaves and resolves the cruciform DNA. This is Holliday junction branch migration complex subunit RuvA from Acidobacterium capsulatum (strain ATCC 51196 / DSM 11244 / BCRC 80197 / JCM 7670 / NBRC 15755 / NCIMB 13165 / 161).